The chain runs to 85 residues: Putative membrane protein insertion efficiency factor (85 aa).

The protein belongs to the UPF0161 family.

It localises to the cell inner membrane. Functionally, could be involved in insertion of integral membrane proteins into the membrane. The sequence is that of Putative membrane protein insertion efficiency factor from Vibrio atlanticus (strain LGP32) (Vibrio splendidus (strain Mel32)).